Here is a 261-residue protein sequence, read N- to C-terminus: Phosphonates import ATP-binding protein PhnC (261 aa).

Residues 8–253 (LRVENLSKTY…WFRRIYGEGA (246 aa)) form the ABC transporter domain. 41 to 48 (GLSGSGKS) contacts ATP.

It belongs to the ABC transporter superfamily. Phosphonates importer (TC 3.A.1.9.1) family. In terms of assembly, the complex is composed of two ATP-binding proteins (PhnC), two transmembrane proteins (PhnE) and a solute-binding protein (PhnD).

The protein localises to the cell inner membrane. The catalysed reaction is phosphonate(out) + ATP + H2O = phosphonate(in) + ADP + phosphate + H(+). Its function is as follows. Part of the ABC transporter complex PhnCDE involved in phosphonates import. Responsible for energy coupling to the transport system. The sequence is that of Phosphonates import ATP-binding protein PhnC from Bdellovibrio bacteriovorus (strain ATCC 15356 / DSM 50701 / NCIMB 9529 / HD100).